We begin with the raw amino-acid sequence, 393 residues long: NADH-quinone oxidoreductase subunit D (393 aa).

Belongs to the complex I 49 kDa subunit family. NDH-1 is composed of 14 different subunits. Subunits NuoB, C, D, E, F, and G constitute the peripheral sector of the complex.

It localises to the cell inner membrane. The catalysed reaction is a quinone + NADH + 5 H(+)(in) = a quinol + NAD(+) + 4 H(+)(out). NDH-1 shuttles electrons from NADH, via FMN and iron-sulfur (Fe-S) centers, to quinones in the respiratory chain. The immediate electron acceptor for the enzyme in this species is believed to be ubiquinone. Couples the redox reaction to proton translocation (for every two electrons transferred, four hydrogen ions are translocated across the cytoplasmic membrane), and thus conserves the redox energy in a proton gradient. The chain is NADH-quinone oxidoreductase subunit D from Ehrlichia ruminantium (strain Gardel).